The chain runs to 152 residues: ALK and LTK ligand 1 (152 aa).

A signal peptide spans 1–23 (MRAEKRWHILLSMILLLITSSQC). Intrachain disulfides connect C113–C149 and C127–C136.

The protein belongs to the ALKAL family. As to expression, expressed at low level in the notochord and iridophore stripes, the eye and the swim bladder.

Its subcellular location is the secreted. The protein localises to the cell membrane. Cytokine that acts as a physiological ligand for receptor tyrosine kinases LTK and ALK. Required for iridophore development in the adult eye by acting as a receptor for LTK. The sequence is that of ALK and LTK ligand 1 from Danio rerio (Zebrafish).